Consider the following 808-residue polypeptide: MDSTNVTTDPNLRPRRGGLQRRFAIIEPALQPDTVTDKIGKDGRVVSLKSNYANFNIKVEGPFYMYDVVMENKSIRTKLELLLAYANSKNNGQPFCFDGRRLFTTSKWHSDEDTENLVIKDVEISIRLLTTFLKNSEEYYQMINIVFNNIQIFMGQEKIGRQFFLGSNCESGGIREGPSFFKMDNFKILGGYSTTITRGTNENGTASTLLYLERINRVLNENNVVSVYRRDQIDQLIGRDIITKYNNKTYRISDIKEMDVNDEVQLGDKKISYLNYFKQRYNINLKNDKQPFVISRVKRSMVRPKEKTENEPEGPTETDQSLSIPGELCYLCGFSDSERSNINLQKNLGTVLKREPRERLNDIRDFCKWTGAGKSKDYMKSWGMCIEEQPITIRGRELAPVDIFSNEVKINTKIPDDWKFGEIKFDVPKGTAHRFGVLVVDRNPSHFNNFIEDVKREIGRLRINYTMDSISSCRSNEVEDALTDFIRVSKVHMALVFIPDDKVYAKVKNFTMSTGLLTQCVTQRNGSNRDDRRRKTVADKSVMQMFSKLGYDPWGINLKMAPTMIVGLDTFHSKTGKRSVQASVFSISAKFSQYISFVNSSKGKNEFHENLGKNFLTALTTFQNKFNTMPLRLIIYRDGVGDSQLAFTKKFETDAVMKMIEKIYENQTLPQIIYVVVKKRISVKFFKDGANPNPGTVVDEKIVKPNFYEFYLVSQKTTKGTASPTNYNVLMDTKFTNKKTNEVSVMSPSVLQQITYSLTHLYFNWMGTIRVPVPTHYAHRLAELVGKIHRGVTPPAINDRIRERLFYL.

Positions arginine 214 to glycine 333 constitute a PAZ domain. The tract at residues serine 300 to leucine 322 is disordered. A Piwi domain is found at histidine 492 to arginine 790.

It belongs to the argonaute family. Piwi subfamily. Expressed in dividing adult somatic stem cells (neoblasts).

The protein is Piwi-like protein 1 (wi-1) of Schmidtea mediterranea (Freshwater planarian flatworm).